Consider the following 130-residue polypeptide: Small ribosomal subunit protein uS9 (130 aa).

It belongs to the universal ribosomal protein uS9 family.

This is Small ribosomal subunit protein uS9 from Buchnera aphidicola subsp. Acyrthosiphon pisum (strain 5A).